We begin with the raw amino-acid sequence, 270 residues long: 5'-AMP-activated protein kinase subunit beta-1 (270 aa).

The segment at 1-44 is disordered; the sequence is MGNTSSERAALDRQGGHKTPRRDSSGGSKDGDRPKILMDSPEDA. Gly-2 is lipidated: N-myristoyl glycine. At Thr-4 the chain carries Phosphothreonine. A phosphoserine mark is found at Ser-5 and Ser-6. Residues 9 to 36 show a composition bias toward basic and acidic residues; that stretch reads AALDRQGGHKTPRRDSSGGSKDGDRPKI. Thr-19 bears the Phosphothreonine mark. Residues Ser-24 and Ser-25 each carry the phosphoserine; by autocatalysis modification. Residues Ser-40, Ser-96, and Ser-101 each carry the phosphoserine modification. Residues 68 to 163 are glycogen-binding domain; the sequence is EVNDKAPAQA…QVKKTDFEVF (96 aa). Ser-108 is modified (phosphoserine; by autocatalysis). A Phosphothreonine modification is found at Thr-148. Ser-182 carries the post-translational modification Phosphoserine. Residue Lys-201 is modified to N6-succinyllysine.

This sequence belongs to the 5'-AMP-activated protein kinase beta subunit family. As to quaternary structure, AMPK is a heterotrimer of an alpha catalytic subunit (PRKAA1 or PRKAA2), a beta (PRKAB1 or PRKAB2) and a gamma non-catalytic subunits (PRKAG1, PRKAG2 or PRKAG3). Interacts with FNIP1 and FNIP2. Post-translationally, phosphorylated when associated with the catalytic subunit (PRKAA1 or PRKAA2). Phosphorylated by ULK1; leading to negatively regulate AMPK activity and suggesting the existence of a regulatory feedback loop between ULK1 and AMPK.

Functionally, non-catalytic subunit of AMP-activated protein kinase (AMPK), an energy sensor protein kinase that plays a key role in regulating cellular energy metabolism. In response to reduction of intracellular ATP levels, AMPK activates energy-producing pathways and inhibits energy-consuming processes: inhibits protein, carbohydrate and lipid biosynthesis, as well as cell growth and proliferation. AMPK acts via direct phosphorylation of metabolic enzymes, and by longer-term effects via phosphorylation of transcription regulators. Also acts as a regulator of cellular polarity by remodeling the actin cytoskeleton; probably by indirectly activating myosin. Beta non-catalytic subunit acts as a scaffold on which the AMPK complex assembles, via its C-terminus that bridges alpha (PRKAA1 or PRKAA2) and gamma subunits (PRKAG1, PRKAG2 or PRKAG3). This Bos taurus (Bovine) protein is 5'-AMP-activated protein kinase subunit beta-1 (PRKAB1).